A 242-amino-acid polypeptide reads, in one-letter code: Myogenic factor 6 (242 aa).

The segment at 31–63 (SPLYPGSDGTLSPCQDQMPPEAGSDSSGEEHVL) is disordered. Residues 93–144 (DRRKAATLRERRRLKKINEAFEALKRRTVANPNQRLPKVEILRSAINYIERL) form the bHLH domain.

Efficient DNA binding requires dimerization with another bHLH protein. Interacts with CSRP3.

It localises to the nucleus. Functionally, involved in muscle differentiation (myogenic factor). Induces fibroblasts to differentiate into myoblasts. Probable sequence specific DNA-binding protein. This chain is Myogenic factor 6 (MYF6), found in Bos taurus (Bovine).